A 196-amino-acid polypeptide reads, in one-letter code: Ribosomal RNA large subunit methyltransferase E (196 aa).

The S-adenosyl-L-methionine site is built by Gly-52, Trp-54, Asp-72, Asp-88, and Asp-111. Lys-151 (proton acceptor) is an active-site residue.

This sequence belongs to the class I-like SAM-binding methyltransferase superfamily. RNA methyltransferase RlmE family.

It localises to the cytoplasm. It catalyses the reaction uridine(2552) in 23S rRNA + S-adenosyl-L-methionine = 2'-O-methyluridine(2552) in 23S rRNA + S-adenosyl-L-homocysteine + H(+). Its function is as follows. Specifically methylates the uridine in position 2552 of 23S rRNA at the 2'-O position of the ribose in the fully assembled 50S ribosomal subunit. This chain is Ribosomal RNA large subunit methyltransferase E, found in Cenarchaeum symbiosum (strain A).